We begin with the raw amino-acid sequence, 443 residues long: Structure-specific endonuclease subunit SLX1 (443 aa).

The region spanning 13–93 is the GIY-YIG domain; that stretch reads RVYVCYCLRS…QKPHASRHLR (81 aa). The interval 121–140 is disordered; it reads FPATRSSAPSSAASHDSGLN. The SLX1-type zinc finger occupies 361 to 419; that stretch reads CGLCGGHINRHVPLSYTHCPHACDAVFHLTCLARYSLEQETRAHARTFCLPTSAWCPMC.

This sequence belongs to the SLX1 family. As to quaternary structure, forms a heterodimer with SLX4. It depends on a divalent metal cation as a cofactor.

It is found in the nucleus. Catalytic subunit of the SLX1-SLX4 structure-specific endonuclease that resolves DNA secondary structures generated during DNA repair and recombination. Has endonuclease activity towards branched DNA substrates, introducing single-strand cuts in duplex DNA close to junctions with ss-DNA. This is Structure-specific endonuclease subunit SLX1 from Malassezia globosa (strain ATCC MYA-4612 / CBS 7966) (Dandruff-associated fungus).